We begin with the raw amino-acid sequence, 345 residues long: Ubiquitin-associated domain-containing protein 2 (345 aa).

The first 35 residues, 1-35 (MFTSTGSSGLYKAPLSKSLLLVPSALSLLLALLLP), serve as a signal peptide directing secretion. At 36 to 91 (HCQKLFVYDLHAVKNDFQIWRLICGRIICLDLKDTFCSSLLIYNFRIFERRYGSRK) the chain is on the extracellular side. Residues 92-112 (FASFLLGSWVLSALFDFLLVE) form a helical membrane-spanning segment. Residues 113-125 (AMQYFFGITAASN) lie on the Cytoplasmic side of the membrane. Residues 126–146 (LPSGFLAPVFALFVPFYCSIP) traverse the membrane as a helical segment. The Extracellular portion of the chain corresponds to 147-163 (RVQVAQILGPLSITNKT). Residue asparagine 161 is glycosylated (N-linked (GlcNAc...) asparagine). Residues 164–184 (LIYILGLQLFTSGSYIWIVAI) form a helical membrane-spanning segment. Over 185-345 (SGLMSGLCYN…NVATNFLLQH (161 aa)) the chain is Cytoplasmic. The region spanning 305-345 (EVSEEQVARLMEMGFSRGDALEALRASNNDLNVATNFLLQH) is the UBA domain.

In terms of assembly, interacts with LMBR1L, FAF2, AMFR and VCP.

It is found in the endoplasmic reticulum membrane. Restricts trafficking of FAF2 from the endoplasmic reticulum to lipid droplets. In association with LMBR1L and E3 ubiquitin-protein ligase AMFR, negatively regulates the canonical Wnt signaling pathway in the lymphocytes by promoting the ubiquitin-mediated degradation of CTNNB1 and Wnt receptors FZD6 and LRP6. The chain is Ubiquitin-associated domain-containing protein 2 (UBAC2) from Macaca fascicularis (Crab-eating macaque).